Reading from the N-terminus, the 156-residue chain is Methylated-DNA--protein-cysteine methyltransferase (156 aa).

Cysteine 120 functions as the Nucleophile; methyl group acceptor in the catalytic mechanism.

It belongs to the MGMT family.

It is found in the cytoplasm. The catalysed reaction is a 6-O-methyl-2'-deoxyguanosine in DNA + L-cysteinyl-[protein] = S-methyl-L-cysteinyl-[protein] + a 2'-deoxyguanosine in DNA. The enzyme catalyses a 4-O-methyl-thymidine in DNA + L-cysteinyl-[protein] = a thymidine in DNA + S-methyl-L-cysteinyl-[protein]. Its function is as follows. Involved in the cellular defense against the biological effects of O6-methylguanine (O6-MeG) and O4-methylthymine (O4-MeT) in DNA. Repairs the methylated nucleobase in DNA by stoichiometrically transferring the methyl group to a cysteine residue in the enzyme. This is a suicide reaction: the enzyme is irreversibly inactivated. The sequence is that of Methylated-DNA--protein-cysteine methyltransferase from Metallosphaera sedula (strain ATCC 51363 / DSM 5348 / JCM 9185 / NBRC 15509 / TH2).